The sequence spans 647 residues: Threonine--tRNA ligase (647 aa).

The TGS domain occupies 1–61; sequence MIKITFPDGA…EEDGSIEIVT (61 aa). The interval 240–538 is catalytic; sequence DHRKLGKELD…LIETYKGAFP (299 aa). Zn(2+) is bound by residues cysteine 334, histidine 385, and histidine 515.

This sequence belongs to the class-II aminoacyl-tRNA synthetase family. As to quaternary structure, homodimer. Zn(2+) is required as a cofactor.

The protein localises to the cytoplasm. The enzyme catalyses tRNA(Thr) + L-threonine + ATP = L-threonyl-tRNA(Thr) + AMP + diphosphate + H(+). Its function is as follows. Catalyzes the attachment of threonine to tRNA(Thr) in a two-step reaction: L-threonine is first activated by ATP to form Thr-AMP and then transferred to the acceptor end of tRNA(Thr). Also edits incorrectly charged L-seryl-tRNA(Thr). The sequence is that of Threonine--tRNA ligase from Streptococcus pyogenes serotype M6 (strain ATCC BAA-946 / MGAS10394).